Here is a 173-residue protein sequence, read N- to C-terminus: NADH-ubiquinone oxidoreductase chain 6 (173 aa).

5 consecutive transmembrane segments (helical) span residues 1-21, 27-47, 48-68, 87-107, and 139-159; these read MTYF…AVAS, YGVV…LSLG, ASFV…VVFV, VIGY…ISGF, and WGVG…FVVL.

This sequence belongs to the complex I subunit 6 family.

The protein resides in the mitochondrion membrane. It catalyses the reaction a ubiquinone + NADH + 5 H(+)(in) = a ubiquinol + NAD(+) + 4 H(+)(out). Functionally, core subunit of the mitochondrial membrane respiratory chain NADH dehydrogenase (Complex I) that is believed to belong to the minimal assembly required for catalysis. Complex I functions in the transfer of electrons from NADH to the respiratory chain. The immediate electron acceptor for the enzyme is believed to be ubiquinone. This is NADH-ubiquinone oxidoreductase chain 6 (MT-ND6) from Brachyramphus marmoratus (Marbled murrelet).